We begin with the raw amino-acid sequence, 245 residues long: P2Y purinoceptor 13 (245 aa).

At 1 to 9 the chain is on the extracellular side; the sequence is QLRAFVCRL. The cysteines at positions 7 and 85 are disulfide-linked. Residues 10–30 traverse the membrane as a helical segment; sequence SSVIFYETMYVGIVLLGLIAF. Residues 31 to 35 lie on the Cytoplasmic side of the membrane; sequence DRFLK. Residues 36 to 56 form a helical membrane-spanning segment; sequence IIRPLRNIFLKKTVFAKTVSV. Residues 57 to 85 lie on the Extracellular side of the membrane; sequence FIWSFFFFISLPNMILSNKEATPSSVKKC. The chain crosses the membrane as a helical span at residues 86–106; it reads ASLKGPLGLKWHQIVNNISQF. Over 107 to 126 the chain is Cytoplasmic; the sequence is IFWTVFVLMLVFYVVIAKKV. The helical transmembrane segment at 127-147 threads the bilayer; the sequence is YDSYRKSKSKDRKNNKKLEGK. Residues 148–174 lie on the Extracellular side of the membrane; it reads VFVVVAVFFVCFAPFHFTRVPYTYSQT. The helical transmembrane segment at 175–195 threads the bilayer; it reads NNKTDCRLQNQLFIAKETTLF. Topologically, residues 196–245 are cytoplasmic; sequence LAATNICMDPLIYIFLCKKFTEKLPCMRGRKTIASSQENQSSQTDNITLG.

It belongs to the G-protein coupled receptor 1 family.

The protein resides in the cell membrane. In terms of biological role, receptor for ADP. Coupled to G(i)-proteins. May play a role in hematopoiesis and the immune system. The polypeptide is P2Y purinoceptor 13 (P2RY13) (Macaca fascicularis (Crab-eating macaque)).